The sequence spans 252 residues: Hydroxyacylglutathione hydrolase (252 aa).

His-54, His-56, Asp-58, His-59, His-113, Asp-132, and His-170 together coordinate Zn(2+).

It belongs to the metallo-beta-lactamase superfamily. Glyoxalase II family. As to quaternary structure, monomer. It depends on Zn(2+) as a cofactor.

It catalyses the reaction an S-(2-hydroxyacyl)glutathione + H2O = a 2-hydroxy carboxylate + glutathione + H(+). Its pathway is secondary metabolite metabolism; methylglyoxal degradation; (R)-lactate from methylglyoxal: step 2/2. Its function is as follows. Thiolesterase that catalyzes the hydrolysis of S-D-lactoyl-glutathione to form glutathione and D-lactic acid. This Gloeobacter violaceus (strain ATCC 29082 / PCC 7421) protein is Hydroxyacylglutathione hydrolase.